Reading from the N-terminus, the 364-residue chain is MAHTWGPQRLAGGQPQANFEESTQGSIFTYTNSNSTRDPFEGPNYHIAPRWVYHLTSAWMVFVVIASVFTNGLVLAATMRFKKLRHPLNWILVNLAIADLAETIIASTISVVNQMYGYFVLGHPLCVVEGYTVSLCGITGLWSLAIISWERWMVVCKPFGNVRFDAKLATAGIAFSWIWAAVWTAPPIFGWSRYWPHGLKTSCGPDVFSGSSYPGVQSYMIVLMITCCFIPLSVIILCYLQVWLAIRAVAKQQKESESTQKAEKEVTRMVMVMIFAYCLCWGPYTFFACFAAAHPGYAFHPLVAALPAYFAKSATIYNPIIYVFMNRQFRNCILQLFGKKVDDSSELSSVSKTEASSVSSVSPA.

Residues 1-52 (MAHTWGPQRLAGGQPQANFEESTQGSIFTYTNSNSTRDPFEGPNYHIAPRWV) are Extracellular-facing. The O-linked (GlcNAc) serine glycan is linked to Ser22. Asn34 is a glycosylation site (N-linked (GlcNAc...) asparagine). A helical transmembrane segment spans residues 53–77 (YHLTSAWMVFVVIASVFTNGLVLAA). At 78–89 (TMRFKKLRHPLN) the chain is on the cytoplasmic side. Residues 90–115 (WILVNLAIADLAETIIASTISVVNQM) form a helical membrane-spanning segment. The Extracellular segment spans residues 116 to 129 (YGYFVLGHPLCVVE). A disulfide bridge links Cys126 with Cys203. The chain crosses the membrane as a helical span at residues 130-149 (GYTVSLCGITGLWSLAIISW). Topologically, residues 150–168 (ERWMVVCKPFGNVRFDAKL) are cytoplasmic. Residues 169–192 (ATAGIAFSWIWAAVWTAPPIFGWS) form a helical membrane-spanning segment. The Extracellular segment spans residues 193–218 (RYWPHGLKTSCGPDVFSGSSYPGVQS). The helical transmembrane segment at 219–246 (YMIVLMITCCFIPLSVIILCYLQVWLAI) threads the bilayer. Residues 247–268 (RAVAKQQKESESTQKAEKEVTR) are Cytoplasmic-facing. A helical transmembrane segment spans residues 269–292 (MVMVMIFAYCLCWGPYTFFACFAA). The Extracellular segment spans residues 293-300 (AHPGYAFH). Residues 301 to 325 (PLVAALPAYFAKSATIYNPIIYVFM) form a helical membrane-spanning segment. Lys312 bears the N6-(retinylidene)lysine mark. Residues 326-364 (NRQFRNCILQLFGKKVDDSSELSSVSKTEASSVSSVSPA) lie on the Cytoplasmic side of the membrane.

It belongs to the G-protein coupled receptor 1 family. Opsin subfamily. Post-translationally, phosphorylated on some or all of the serine and threonine residues present in the C-terminal region. As to expression, the three color pigments are found in the cone photoreceptor cells.

The protein resides in the membrane. In terms of biological role, visual pigments are the light-absorbing molecules that mediate vision. They consist of an apoprotein, opsin, covalently linked to cis-retinal. This chain is Long-wave-sensitive opsin 1 (OPN1LW), found in Capra hircus (Goat).